The following is a 537-amino-acid chain: Beta-hexosaminidase subunit beta (537 aa).

Positions 1 to 23 are cleaved as a signal peptide; sequence MPGSPRRAPGLLLQALVAMVSLA. Asn62 is a glycosylation site (N-linked (GlcNAc...) asparagine). A disulfide bridge links Cys69 with Cys115. Residues Asn168 and Asn305 are each glycosylated (N-linked (GlcNAc...) asparagine). 2 cysteine pairs are disulfide-bonded: Cys287/Cys338 and Cys512/Cys529. Catalysis depends on Glu333, which acts as the Proton donor.

This sequence belongs to the glycosyl hydrolase 20 family. There are 3 forms of beta-hexosaminidase: hexosaminidase A is a heterodimer composed of one subunit alpha and one subunit beta (chain A and B); hexosaminidase B is a homodimer of two beta subunits (two chains A and B); hexosaminidase S is a homodimer of two alpha subunits. The composition of the dimer (isozyme A versus isozyme S) has a significant effect on the substrate specificity of the alpha subunit active site.

The protein resides in the lysosome. The protein localises to the cytoplasmic vesicle. It localises to the secretory vesicle. It is found in the cortical granule. It carries out the reaction Hydrolysis of terminal non-reducing N-acetyl-D-hexosamine residues in N-acetyl-beta-D-hexosaminides.. The enzyme catalyses N-acetyl-beta-D-galactosaminyl-(1-&gt;4)-beta-D-3-sulfogalactosyl-(1-&gt;4)-beta-D-glucosyl-(1&lt;-&gt;1')-ceramide + H2O = a beta-D-3-sulfogalactosyl-(1-&gt;4)-beta-D-glucosyl-(1&lt;-&gt;1')-ceramide + N-acetyl-beta-D-galactosamine. The catalysed reaction is a ganglioside GM2 (d18:1(4E)) + H2O = a ganglioside GM3 (d18:1(4E)) + N-acetyl-beta-D-galactosamine. It catalyses the reaction a ganglioside GM2 + H2O = a ganglioside GM3 + N-acetyl-beta-D-galactosamine. It carries out the reaction beta-D-GalNAc-(1-&gt;4)-alpha-L-IdoA-(1-&gt;3)-beta-D-GalNAc-4-sulfate-(1-&gt;4)-alpha-L-IdoA-(1-&gt;3)-D-GalNAc-4-sulfate + H2O = alpha-L-IdoA-(1-&gt;3)-beta-D-GalNAc-4-sulfate-(1-&gt;4)-alpha-L-IdoA-(1-&gt;3)-D-GalNAc-4-sulfate + N-acetyl-D-galactosamine. The enzyme catalyses N-acetyl-beta-D-6-sulfogalactosaminyl-(1-&gt;4)-alpha-L-iduronyl-(1-&gt;3)-N-acetyl-D-6-sulfogalactosamine + H2O = alpha-L-iduronyl-(1-&gt;3)-N-acetyl-D-6-sulfogalactosamine + N-acetyl-D-6-sulfogalactosamine. Its activity is regulated as follows. Addition of GM2A stimulates the hydrolysis of sulfated glycosphingolipid SM2 and the ganglioside GM2. Its function is as follows. Hydrolyzes the non-reducing end N-acetyl-D-hexosamine and/or sulfated N-acetyl-D-hexosamine of glycoconjugates, such as the oligosaccharide moieties from proteins and neutral glycolipids, or from certain mucopolysaccharides. The isozyme B does not hydrolyze each of these substrates, however hydrolyzes efficiently neutral oligosaccharide. Only the isozyme A is responsible for the degradation of GM2 gangliosides in the presence of GM2A. During fertilization is responsible, at least in part, for the zona block to polyspermy. Present in the cortical granules of non-activated oocytes, is exocytosed during the cortical reaction in response to oocyte activation and inactivates the sperm galactosyltransferase-binding site, accounting for the block in sperm binding to the zona pellucida. The chain is Beta-hexosaminidase subunit beta from Rattus norvegicus (Rat).